Reading from the N-terminus, the 186-residue chain is Peptidyl-tRNA hydrolase (186 aa).

Tyrosine 16 contributes to the tRNA binding site. Residue histidine 21 is the Proton acceptor of the active site. Residues tyrosine 66, asparagine 68, and asparagine 114 each coordinate tRNA.

Belongs to the PTH family. In terms of assembly, monomer.

It is found in the cytoplasm. The catalysed reaction is an N-acyl-L-alpha-aminoacyl-tRNA + H2O = an N-acyl-L-amino acid + a tRNA + H(+). Hydrolyzes ribosome-free peptidyl-tRNAs (with 1 or more amino acids incorporated), which drop off the ribosome during protein synthesis, or as a result of ribosome stalling. In terms of biological role, catalyzes the release of premature peptidyl moieties from peptidyl-tRNA molecules trapped in stalled 50S ribosomal subunits, and thus maintains levels of free tRNAs and 50S ribosomes. In Ureaplasma parvum serovar 3 (strain ATCC 700970), this protein is Peptidyl-tRNA hydrolase.